A 215-amino-acid chain; its full sequence is Histidine biosynthesis bifunctional protein HisIE (215 aa).

Residues 1 to 118 (MTKSISIEHL…YKNDVALLQI (118 aa)) are phosphoribosyl-AMP cyclohydrolase. Residues 119–215 (IPQVSAKIKE…HVEKEGQQRE (97 aa)) form a phosphoribosyl-ATP pyrophosphohydrolase region.

This sequence in the N-terminal section; belongs to the PRA-CH family. The protein in the C-terminal section; belongs to the PRA-PH family.

The protein localises to the cytoplasm. The catalysed reaction is 1-(5-phospho-beta-D-ribosyl)-ATP + H2O = 1-(5-phospho-beta-D-ribosyl)-5'-AMP + diphosphate + H(+). It catalyses the reaction 1-(5-phospho-beta-D-ribosyl)-5'-AMP + H2O = 1-(5-phospho-beta-D-ribosyl)-5-[(5-phospho-beta-D-ribosylamino)methylideneamino]imidazole-4-carboxamide. Its pathway is amino-acid biosynthesis; L-histidine biosynthesis; L-histidine from 5-phospho-alpha-D-ribose 1-diphosphate: step 2/9. The protein operates within amino-acid biosynthesis; L-histidine biosynthesis; L-histidine from 5-phospho-alpha-D-ribose 1-diphosphate: step 3/9. This chain is Histidine biosynthesis bifunctional protein HisIE, found in Oceanobacillus iheyensis (strain DSM 14371 / CIP 107618 / JCM 11309 / KCTC 3954 / HTE831).